The chain runs to 255 residues: Myogenic factor 5 (255 aa).

The region spanning 83–134 (DRRKAATMRERRRLKKVNQAFDTLKRCTTTNPNQRLPKVEILRNAIRYIESL) is the bHLH domain. Residues 217–249 (SEQPGLPLQDPASLSPVASTDSQPATPGASSSR) are disordered. The segment covering 232–249 (PVASTDSQPATPGASSSR) has biased composition (polar residues).

In terms of assembly, efficient DNA binding requires dimerization with another bHLH protein.

The protein resides in the nucleus. In terms of biological role, acts as a transcriptional activator that promotes transcription of muscle-specific target genes and plays a role in muscle differentiation. Together with MYOG and MYOD1, co-occupies muscle-specific gene promoter core region during myogenesis. Induces fibroblasts to differentiate into myoblasts. Probable sequence specific DNA-binding protein. The polypeptide is Myogenic factor 5 (MYF5) (Bos taurus (Bovine)).